The chain runs to 199 residues: FMN-dependent NADH:quinone oxidoreductase 4 (199 aa).

FMN contacts are provided by residues Ser-10, 95–98 (MYNL), and 139–142 (SRGG).

It belongs to the azoreductase type 1 family. Homodimer. Requires FMN as cofactor.

It carries out the reaction 2 a quinone + NADH + H(+) = 2 a 1,4-benzosemiquinone + NAD(+). It catalyses the reaction N,N-dimethyl-1,4-phenylenediamine + anthranilate + 2 NAD(+) = 2-(4-dimethylaminophenyl)diazenylbenzoate + 2 NADH + 2 H(+). Functionally, quinone reductase that provides resistance to thiol-specific stress caused by electrophilic quinones. Its function is as follows. Also exhibits azoreductase activity. Catalyzes the reductive cleavage of the azo bond in aromatic azo compounds to the corresponding amines. This is FMN-dependent NADH:quinone oxidoreductase 4 from Burkholderia lata (strain ATCC 17760 / DSM 23089 / LMG 22485 / NCIMB 9086 / R18194 / 383).